The primary structure comprises 693 residues: Iron-sulfur clusters transporter atm1, mitochondrial (693 aa).

The N-terminal 28 residues, 1-28, are a transit peptide targeting the mitochondrion; it reads MLERCPWKLISSPRNIPARSFLNSRGTY. Residues 29 to 118 are Mitochondrial matrix-facing; that stretch reads LVLRKSNILP…PKGKTNLKVR (90 aa). A helical membrane pass occupies residues 119 to 140; the sequence is VVSALALLVAAKILNVQVPFYF. Positions 119–409 constitute an ABC transmembrane type-1 domain; it reads VVSALALLVA…LGSVYREMRQ (291 aa). Over 141-163 the chain is Mitochondrial intermembrane; it reads KSIIDTMNTTLVQEVGALWSTVG. A helical transmembrane segment spans residues 164–187; the sequence is AVVLGYGFARIFSTVFQELRNSVF. The Mitochondrial matrix segment spans residues 188-236; it reads AIVSQSAIRSVSSNVYQHLLNLDMNFHLSKQTGSITRAMDRGTKGISFI. Residues 237-260 traverse the membrane as a helical segment; sequence LSSMVLHIIPITLEIAMVSGILTY. A topological domain (mitochondrial intermembrane) is located at residue Lys-261. The chain crosses the membrane as a helical span at residues 262 to 282; the sequence is YGPSFSAIAATTVALYALFTV. At 283–348 the chain is on the mitochondrial matrix side; that stretch reads RTTSWRTVFR…ANVKVASSLA (66 aa). Glutathione contacts are provided by residues 288–292 and 351–354; these read RTVFR and NSGQ. The chain crosses the membrane as a helical span at residues 349-367; the sequence is FLNSGQAIIFSTALTLMMY. Residues 368–382 lie on the Mitochondrial intermembrane side of the membrane; it reads MGCRGIVTSNLTVGD. Residues 383-404 form a helical membrane-spanning segment; sequence LVMINQLVFQLSIPLNFLGSVY. Position 401 (Gly-401) interacts with glutathione. Residues 405–693 are Mitochondrial matrix-facing; sequence REMRQAFTDM…FGESNKSGDA (289 aa). Positions 443–679 constitute an ABC transporter domain; the sequence is IQFDNVHFSY…NSVYTSMWHS (237 aa). ATP is bound by residues Tyr-452 and 476–487; that span reads GASGCGKSTILR.

Belongs to the ABC transporter superfamily. ABCB family. Heavy Metal importer (TC 3.A.1.210) subfamily. Homodimer.

The protein resides in the mitochondrion inner membrane. Performs an essential function in the generation of cytoplasmic iron-sulfur proteins by mediating the ATP-dependent export of Fe/S cluster precursors synthesized by nfs1 and other mitochondrial proteins. Hydrolyzes ATP. Binds glutathione and may function by transporting a glutathione-conjugated iron-sulfur compound. The chain is Iron-sulfur clusters transporter atm1, mitochondrial from Schizosaccharomyces pombe (strain 972 / ATCC 24843) (Fission yeast).